The primary structure comprises 288 residues: Eukaryotic translation initiation factor 3 subunit F-2 (288 aa).

The MPN domain occupies 12–149; the sequence is VLLHPLVLFQ…TRIFCAVATG (138 aa).

This sequence belongs to the eIF-3 subunit F family. As to quaternary structure, component of the eukaryotic translation initiation factor 3 (eIF-3) complex. The eIF-3 complex interacts with pix.

Its subcellular location is the cytoplasm. Its function is as follows. Component of the eukaryotic translation initiation factor 3 (eIF-3) complex, which is involved in protein synthesis of a specialized repertoire of mRNAs and, together with other initiation factors, stimulates binding of mRNA and methionyl-tRNAi to the 40S ribosome. The eIF-3 complex specifically targets and initiates translation of a subset of mRNAs involved in cell proliferation. The sequence is that of Eukaryotic translation initiation factor 3 subunit F-2 from Drosophila persimilis (Fruit fly).